Reading from the N-terminus, the 361-residue chain is Chorismate synthase (361 aa).

2 residues coordinate NADP(+): arginine 48 and arginine 54. FMN contacts are provided by residues 125–127 (RSS), 238–239 (NA), glycine 278, 293–297 (KPTSS), and arginine 319.

It belongs to the chorismate synthase family. Homotetramer. It depends on FMNH2 as a cofactor.

It catalyses the reaction 5-O-(1-carboxyvinyl)-3-phosphoshikimate = chorismate + phosphate. It participates in metabolic intermediate biosynthesis; chorismate biosynthesis; chorismate from D-erythrose 4-phosphate and phosphoenolpyruvate: step 7/7. In terms of biological role, catalyzes the anti-1,4-elimination of the C-3 phosphate and the C-6 proR hydrogen from 5-enolpyruvylshikimate-3-phosphate (EPSP) to yield chorismate, which is the branch point compound that serves as the starting substrate for the three terminal pathways of aromatic amino acid biosynthesis. This reaction introduces a second double bond into the aromatic ring system. The chain is Chorismate synthase from Salmonella paratyphi A (strain ATCC 9150 / SARB42).